Reading from the N-terminus, the 441-residue chain is Ribulose bisphosphate carboxylase large chain (441 aa).

2 residues coordinate substrate: Asn89 and Thr139. Lys141 (proton acceptor) is an active-site residue. Substrate is bound at residue Lys143. Positions 167, 169, and 170 each coordinate Mg(2+). Lys167 is modified (N6-carboxylysine). The Proton acceptor role is filled by His260. Residues Xaa261, His293, and Ser345 each coordinate substrate.

This sequence belongs to the RuBisCO large chain family. Type I subfamily. In terms of assembly, heterohexadecamer of 8 large chains and 8 small chains; disulfide-linked. The disulfide link is formed within the large subunit homodimers. Mg(2+) serves as cofactor. The disulfide bond which can form in the large chain dimeric partners within the hexadecamer appears to be associated with oxidative stress and protein turnover.

The protein resides in the plastid. Its subcellular location is the chloroplast. The enzyme catalyses 2 (2R)-3-phosphoglycerate + 2 H(+) = D-ribulose 1,5-bisphosphate + CO2 + H2O. It catalyses the reaction D-ribulose 1,5-bisphosphate + O2 = 2-phosphoglycolate + (2R)-3-phosphoglycerate + 2 H(+). Its function is as follows. RuBisCO catalyzes two reactions: the carboxylation of D-ribulose 1,5-bisphosphate, the primary event in carbon dioxide fixation, as well as the oxidative fragmentation of the pentose substrate in the photorespiration process. Both reactions occur simultaneously and in competition at the same active site. In Apocynum cannabinum (Hemp dogbane), this protein is Ribulose bisphosphate carboxylase large chain.